Here is a 1627-residue protein sequence, read N- to C-terminus: DNA topoisomerase 2-beta (1627 aa).

ATP is bound by residues asparagine 117, asparagine 146, 174-176, and 187-194; these read SSN and GRNGYGAK. The segment at 368-370 is interaction with DNA; sequence KKK. ATP is bound at residue 402–404; that stretch reads QTK. The Toprim domain maps to 481–598; that stretch reads CTLILTEGDS…SLLKHGFLEE (118 aa). 3 residues coordinate Mg(2+): glutamate 487, aspartate 567, and aspartate 569. In terms of domain architecture, Topo IIA-type catalytic spans 741–1194; the sequence is IPSLVDGLKP…SASDLWKEDL (454 aa). Tyrosine 831 (O-(5'-phospho-DNA)-tyrosine intermediate) is an active-site residue. Residues 1016-1025 form an interaction with DNA region; the sequence is KLQTSLTCNS. Disordered stretches follow at residues 1115–1144, 1224–1248, 1283–1365, and 1378–1627; these read AWKE…GSTS, KVGK…RRIV, EFGG…DSLL, and DFSK…DMFN. Low complexity predominate over residues 1131-1144; that stretch reads NANDDASSASGSTS. The span at 1296-1305 shows a compositional bias: polar residues; that stretch reads TVNTAASGTK. Positions 1339-1349 are enriched in basic and acidic residues; that stretch reads PWSDDESKSES. Acidic residues-rich tracts occupy residues 1381–1392 and 1412–1428; these read KEEDDAHDDDDA and REDE…DEYD. 2 stretches are compositionally biased toward basic and acidic residues: residues 1436-1448 and 1462-1471; these read PSPE…KKNQ and KTDDDTTKLD. Basic residues-rich tracts occupy residues 1542–1552 and 1566–1578; these read GKGRGAKKRKT and KAPK…KSKK. The span at 1616 to 1627 shows a compositional bias: acidic residues; sequence ESDEDDDFDMFN.

The protein belongs to the type II topoisomerase family. Homodimer. Requires Mg(2+) as cofactor. It depends on Mn(2+) as a cofactor. Ca(2+) is required as a cofactor.

The protein resides in the nucleus. It localises to the nucleolus. The protein localises to the nucleoplasm. It catalyses the reaction ATP-dependent breakage, passage and rejoining of double-stranded DNA.. Functionally, key decatenating enzyme that alters DNA topology by binding to two double-stranded DNA molecules, generating a double-stranded break in one of the strands, passing the intact strand through the broken strand, and religating the broken strand. Plays a role in B-cell differentiation. The protein is DNA topoisomerase 2-beta (TOP2B) of Gallus gallus (Chicken).